The primary structure comprises 150 residues: Histone H2B.2 (150 aa).

Basic and acidic residues predominate over residues 1 to 16 (MAPKAEKKPAAKKPAE). Residues 1 to 57 (MAPKAEKKPAAKKPAEEEPAAEKAPAGKKPKAEKRVPAGKSAGKEGGEGKRGRKKGK) are disordered. N6-acetyllysine occurs at positions 7 and 34. Lysine 146 participates in a covalent cross-link: Glycyl lysine isopeptide (Lys-Gly) (interchain with G-Cter in ubiquitin).

The protein belongs to the histone H2B family. The nucleosome is a histone octamer containing two molecules each of H2A, H2B, H3 and H4 assembled in one H3-H4 heterotetramer and two H2A-H2B heterodimers. The octamer wraps approximately 147 bp of DNA. Can be acetylated to form H2BK6ac and H2BK33ac. Post-translationally, monoubiquitinated to form H2BK143ub1; may give a specific tag for epigenetic transcriptional activation.

It is found in the nucleus. Its subcellular location is the chromosome. In terms of biological role, core component of nucleosome. Nucleosomes wrap and compact DNA into chromatin, limiting DNA accessibility to the cellular machineries which require DNA as a template. Histones thereby play a central role in transcription regulation, DNA repair, DNA replication and chromosomal stability. DNA accessibility is regulated via a complex set of post-translational modifications of histones, also called histone code, and nucleosome remodeling. In Zea mays (Maize), this protein is Histone H2B.2.